We begin with the raw amino-acid sequence, 308 residues long: Acyl transferase (308 aa).

Active-site charge relay system residues include S116, D213, and H243.

It belongs to the LuxD family.

The protein operates within lipid metabolism; fatty acid reduction for biolumincescence. In terms of biological role, acyl transferase is part of the fatty acid reductase system required for aldehyde biosynthesis; it produces fatty acids for the luminescent reaction. In Shewanella hanedai (Alteromonas hanedai), this protein is Acyl transferase.